The chain runs to 100 residues: Small ribosomal subunit protein bS6 (100 aa).

This sequence belongs to the bacterial ribosomal protein bS6 family.

In terms of biological role, binds together with bS18 to 16S ribosomal RNA. The polypeptide is Small ribosomal subunit protein bS6 (Tropheryma whipplei (strain TW08/27) (Whipple's bacillus)).